Here is a 331-residue protein sequence, read N- to C-terminus: NADH-quinone oxidoreductase subunit H (331 aa).

The next 8 membrane-spanning stretches (helical) occupy residues phenylalanine 13 to leucine 33, tryptophan 80 to isoleucine 100, isoleucine 113 to glycine 133, leucine 159 to valine 179, alanine 183 to valine 203, valine 249 to leucine 269, valine 273 to isoleucine 293, and lysine 311 to isoleucine 331.

It belongs to the complex I subunit 1 family. In terms of assembly, NDH-1 is composed of 14 different subunits. Subunits NuoA, H, J, K, L, M, N constitute the membrane sector of the complex.

It localises to the cell membrane. The catalysed reaction is a quinone + NADH + 5 H(+)(in) = a quinol + NAD(+) + 4 H(+)(out). Its function is as follows. NDH-1 shuttles electrons from NADH, via FMN and iron-sulfur (Fe-S) centers, to quinones in the respiratory chain. The immediate electron acceptor for the enzyme in this species is believed to be ubiquinone. Couples the redox reaction to proton translocation (for every two electrons transferred, four hydrogen ions are translocated across the cytoplasmic membrane), and thus conserves the redox energy in a proton gradient. This subunit may bind ubiquinone. In Rubrobacter xylanophilus (strain DSM 9941 / JCM 11954 / NBRC 16129 / PRD-1), this protein is NADH-quinone oxidoreductase subunit H.